The sequence spans 862 residues: Cadherin-related family member 5 (862 aa).

Residues 1-28 form the signal peptide; sequence MGAPALLWPPLLLPLLTVLFGHLPGTLA. The Extracellular segment spans residues 29–671; that stretch reads QAQVCSANQT…GQRFSTVDMA (643 aa). N-linked (GlcNAc...) asparagine glycans are attached at residues Asn36, Asn45, Asn135, Asn173, Asn201, Asn311, Asn408, Asn438, and Asn479. 4 consecutive Cadherin domains span residues 40–127, 128–240, 252–357, and 358–462; these read FTMN…APEF, PFTI…TPWF, IQAQ…PLQF, and SQSL…PPST. Residues 452–658 form a disordered region; it reads IQVSEREPPS…TTGPISGVGE (207 aa). Over residues 461–500 the composition is skewed to low complexity; the sequence is STESPTPPEAGGTTGPSSNTTLETPSTSGTSQGPATTSSG. The span at 529–652 shows a compositional bias: polar residues; it reads LGISTSPQTA…GTSQPTTTGP (124 aa). Repeat copies occupy residues 545–575, 576–606, and 607–636. The segment at 545–648 is 4 X 31 AA approximate tandem repeats; sequence TQTPKPGTSQ…TPKPGTSQPT (104 aa). One copy of the 4; truncated repeat lies at 637–648; the sequence is TQTPKPGTSQPT. The helical transmembrane segment at 672 to 692 threads the bilayer; it reads VLGGVLGALLLLALIFLIILI. Over 693 to 862 the chain is Cytoplasmic; it reads HKHYRHRFTC…LGAVADNTYV (170 aa). The mediates interaction with USH1C and MYO7B and is required for proper localization to microvilli tips and function in microvilli organization stretch occupies residues 693-862; it reads HKHYRHRFTC…LGAVADNTYV (170 aa). 2 disordered regions span residues 706–803 and 821–862; these read KAKE…EGGY and LNEP…NTYV. 3 positions are modified to phosphoserine: Ser729, Ser751, and Ser755. Residues 739 to 768 are compositionally biased toward pro residues; sequence GPEPVQPPLRPPSPMSSSPTPPSSMPPSPQ. A Phosphothreonine modification is found at Thr758. A phosphoserine mark is found at Ser766 and Ser783. Basic and acidic residues predominate over residues 791 to 801; that stretch reads LTKERRPEGEG. Position 825 is a phosphothreonine (Thr825). The segment covering 827-837 has biased composition (low complexity); that stretch reads DVDSASASGSE. Phosphoserine is present on residues Ser832, Ser834, and Ser836.

Part of the IMAC/intermicrovillar adhesion complex/intermicrovillar tip-link complex composed of ANKS4B, MYO7B, USH1C, CDHR2 and CDHR5. Interacts (via cytoplasmic domain) with USH1C and MYO7B; required for proper localization of CDHR5 to microvilli tips and its function in brush border differentiation. In terms of processing, N- and O-glycosylated. Expressed predominantly in kidney. Also detected in lung and small intestine.

It is found in the apical cell membrane. The protein localises to the cell projection. The protein resides in the microvillus membrane. Intermicrovillar adhesion molecule that forms, via its extracellular domain, calcium-dependent heterophilic complexes with CDHR2 on adjacent microvilli. Thereby, controls the packing of microvilli at the apical membrane of epithelial cells. Through its cytoplasmic domain, interacts with microvillus cytoplasmic proteins to form the intermicrovillar adhesion complex/IMAC. This complex plays a central role in microvilli and epithelial brush border differentiation. The polypeptide is Cadherin-related family member 5 (Rattus norvegicus (Rat)).